The primary structure comprises 201 residues: Histidinol dehydrogenase (201 aa).

Belongs to the histidinol dehydrogenase family. Homodimer. Zn(2+) serves as cofactor.

The catalysed reaction is L-histidinol + 2 NAD(+) + H2O = L-histidine + 2 NADH + 3 H(+). The protein operates within amino-acid biosynthesis; L-histidine biosynthesis; L-histidine from 5-phospho-alpha-D-ribose 1-diphosphate: step 9/9. Its function is as follows. Catalyzes the sequential NAD-dependent oxidations of L-histidinol to L-histidinaldehyde and then to L-histidine. In Buchnera aphidicola subsp. Melaphis rhois, this protein is Histidinol dehydrogenase (hisD).